Here is a 404-residue protein sequence, read N- to C-terminus: Cytoplasmic tRNA 2-thiolation protein 2 (404 aa).

Belongs to the CTU2/NCS2 family.

Its subcellular location is the cytoplasm. It participates in tRNA modification; 5-methoxycarbonylmethyl-2-thiouridine-tRNA biosynthesis. Plays a central role in 2-thiolation of mcm(5)S(2)U at tRNA wobble positions of tRNA(Lys), tRNA(Glu) and tRNA(Gln). May act by forming a heterodimer with NCS6/CTU1 that ligates sulfur from thiocarboxylated URM1 onto the uridine of tRNAs at wobble position. This chain is Cytoplasmic tRNA 2-thiolation protein 2, found in Drosophila mojavensis (Fruit fly).